We begin with the raw amino-acid sequence, 777 residues long: Cyclin-F (777 aa).

Positions 20–28 (KRRIKRRPR) match the Nuclear localization signal 1 motif. The F-box domain occupies 29-76 (NLTILSLPEDVLFHILKWLSVGDILAVRAVHSHLKYLVDNHASVWASA). A Cyclin N-terminal domain is found at 288 to 405 (QASQAVNKQQ…EIISALEGKI (118 aa)). Short sequence motifs (d box) lie at residues 310 to 313 (RYIL), 343 to 346 (RRRL), and 349 to 352 (RYKL). Disordered stretches follow at residues 544 to 591 (QESP…TPTA) and 651 to 777 (QESS…HLAS). The Nuclear localization signal 2 signature appears at 568 to 574 (RRSKRKR). The segment at 582-761 (RGSFVTTPTA…ESGVHQQPVK (180 aa)) is PEST. Composition is skewed to low complexity over residues 695–708 (SGYS…PISS) and 719–731 (STSV…HSST). Residues 751-767 (PESGVHQQPVKRQNLSV) are compositionally biased toward polar residues. The D box 4 motif lies at 762–765 (RQNL). Residues 768-777 (HSDKDMHLAS) show a composition bias toward basic and acidic residues.

This sequence belongs to the cyclin family. Cyclin AB subfamily. As to quaternary structure, component of the SCF(CCNF) complex consisting of CUL1, RBX1, SKP1 and CCNF. Interacts with SKP1. Interacts with CUL1. Interacts with CCNB1; interaction is required for nuclear localization of CCNB1. Interacts with CCP110; this interaction leads to CCP110 ubiquitination and degradation via the proteasome pathway. Interacts (via the Cyclin N-terminal domain) with MYBL2/BMYB. Interacts with FZR1/CDH1 (via N-terminus). Interacts with RRM2 (via Cy motif and when phosphorylated at 'Thr-33'); the interaction occurs exclusively in G2 and early M. Interacts with CDC6 (via Cy motif); the interaction takes place during G2 and M phase. Degraded when the spindle assembly checkpoint is activated during the G2-M transition. Degradation is not dependent on the proteasome or ubiquitin and depends on the C-terminal PEST sequence. Post-translationally, phosphorylated just before cells enter into mitosis. In terms of processing, ubiquitinated by the anaphase-promoting complex (APC/C); leading to its degradation by the proteasome.

It is found in the nucleus. Its subcellular location is the cytoplasm. The protein localises to the perinuclear region. The protein resides in the cytoskeleton. It localises to the microtubule organizing center. It is found in the centrosome. Its subcellular location is the centriole. In terms of biological role, substrate recognition component of a SCF (SKP1-CUL1-F-box protein) E3 ubiquitin-protein ligase complex which mediates the ubiquitination and subsequent proteasomal degradation of target proteins. The SCF(CCNF) E3 ubiquitin-protein ligase complex is an integral component of the ubiquitin proteasome system (UPS) and links proteasome degradation to the cell cycle. Mediates the substrate recognition and the proteasomal degradation of various target proteins involved in the regulation of cell cycle progression and in the maintenance of genome stability. Mediates the ubiquitination and subsequent proteasomal degradation of CP110 during G2 phase, thereby acting as an inhibitor of centrosome reduplication. In G2, mediates the ubiquitination and proteasomal degradation of CDC6, thereby suppressing DNA re-replication and preventing genome instability. Involved in the ubiquitination and degradation of the substrate adapter CDH1 of the anaphase-promoting complex (APC/C), thereby acting as an antagonist of APC/C in regulating G1 progression and S phase entry. May play a role in the G2 cell cycle checkpoint control after DNA damage, possibly by promoting the ubiquitination of MYBL2/BMYB. The chain is Cyclin-F (Ccnf) from Mus musculus (Mouse).